Consider the following 101-residue polypeptide: DNA-binding protein HU (101 aa).

It belongs to the bacterial histone-like protein family. In terms of assembly, homodimer.

Histone-like DNA-binding protein which is capable of wrapping DNA to stabilize it, and thus to prevent its denaturation under extreme environmental conditions. The protein is DNA-binding protein HU (hup) of Rickettsia bellii (strain RML369-C).